We begin with the raw amino-acid sequence, 381 residues long: L-lactate dehydrogenase A-like 6B (381 aa).

NAD(+)-binding positions include 101 to 106 and R148; that span reads DVDEGR. 3 residues coordinate substrate: R155, N187, and R218. An NAD(+)-binding site is contributed by N187. The Proton acceptor role is filled by H242. T297 is a binding site for substrate.

Belongs to the LDH/MDH superfamily. LDH family.

The enzyme catalyses (S)-lactate + NAD(+) = pyruvate + NADH + H(+). It functions in the pathway fermentation; pyruvate fermentation to lactate; (S)-lactate from pyruvate: step 1/1. This is L-lactate dehydrogenase A-like 6B (LDHAL6B) from Bos taurus (Bovine).